The following is a 392-amino-acid chain: Selenide, water dikinase 1 (392 aa).

Position 2 is an N-acetylserine (serine 2). The active site involves cysteine 31. ATP is bound by residues lysine 32, 67-69, aspartate 87, aspartate 110, and 161-164; these read GMD and GGQT. Aspartate 69 is a Mg(2+) binding site. Aspartate 110 serves as a coordination point for Mg(2+). Aspartate 265 is a Mg(2+) binding site.

This sequence belongs to the selenophosphate synthase 1 family. Class II subfamily. As to quaternary structure, homodimer. Heterodimer with isoform 3. In terms of assembly, homodimer. Heterodimer with isoform 4. Homodimer. Heterodimer with isoform 1. As to quaternary structure, homodimer. Heterodimer with isoform 2. Mg(2+) is required as a cofactor. In terms of tissue distribution, gradually expressed during the cell cycle until G2/M phase and then decreases. Gradually expressed during the cell cycle until S phase and then decreases.

The protein localises to the cell membrane. It localises to the nucleus membrane. Its subcellular location is the cytoplasm. It carries out the reaction hydrogenselenide + ATP + H2O = selenophosphate + AMP + phosphate + 2 H(+). Activated by phosphate ions and by potassium ions. In terms of biological role, synthesizes selenophosphate from selenide and ATP. In Homo sapiens (Human), this protein is Selenide, water dikinase 1 (SEPHS1).